The primary structure comprises 177 residues: Large ribosomal subunit protein uL6 (177 aa).

It belongs to the universal ribosomal protein uL6 family. As to quaternary structure, part of the 50S ribosomal subunit.

Its function is as follows. This protein binds to the 23S rRNA, and is important in its secondary structure. It is located near the subunit interface in the base of the L7/L12 stalk, and near the tRNA binding site of the peptidyltransferase center. The chain is Large ribosomal subunit protein uL6 from Methylococcus capsulatus (strain ATCC 33009 / NCIMB 11132 / Bath).